We begin with the raw amino-acid sequence, 1573 residues long: Mediator of RNA polymerase II transcription subunit 1 (1573 aa).

The short motif at 588–592 is the LXXLL motif 1 element; sequence LTSLL. 3 disordered regions span residues 595–691, 774–883, and 928–1564; these read TSNS…EDDF, SKLP…FKDF, and LGGP…GDDD. Pro residues predominate over residues 606 to 617; that stretch reads PTPPQHTPPPAS. The short motif at 629-633 is the LXXLL motif 2 element; sequence LMNLL. A compositionally biased stretch (polar residues) spans 651–668; that stretch reads ERQNSSGSPRTELGSSAS. The span at 678–691 shows a compositional bias: basic and acidic residues; the sequence is TGTEKMKNQTEDDF. Polar residues-rich tracts occupy residues 791–804, 835–864, and 934–944; these read RDSS…STLF, GSPN…QSGF, and QETQSRSQSPL. Basic and acidic residues predominate over residues 949-961; sequence LGKDRPQKQKVKE. The span at 963–973 shows a compositional bias: gly residues; that stretch reads GNGGGAGGGLS. Composition is skewed to low complexity over residues 1025–1038, 1053–1085, 1092–1116, 1124–1143, and 1155–1164; these read PTST…GTSG, KITI…SSSS, SSLS…MKIG, SGQS…SMGK, and SSNVNNSSGS. A compositionally biased stretch (polar residues) spans 1176–1193; that stretch reads MNPSLSKPNISPSHSRPS. Over residues 1226–1277 the composition is skewed to low complexity; that stretch reads LSGSGSNSTTKSSSGLVSSGSLTQKPNSSSSSSSSSSSSSSSSSSSSSSFSS. Over residues 1278–1290 the composition is skewed to polar residues; the sequence is GVSQNLHSSSKGK. Over residues 1350–1362 the composition is skewed to basic and acidic residues; sequence PTKREKGEKDKSK. 2 stretches are compositionally biased toward polar residues: residues 1420 to 1435 and 1443 to 1457; these read SQMQ…SGST and PSHN…QALD. Positions 1461 to 1471 are enriched in low complexity; the sequence is ESGSSSIAEKS. The span at 1496 to 1505 shows a compositional bias: basic residues; sequence KHKKHKKEKK. Residues 1506–1518 show a composition bias toward basic and acidic residues; sequence RLKDKDRDREKKK.

It belongs to the Mediator complex subunit 1 family. As to quaternary structure, component of the Mediator complex.

It is found in the nucleus. Its function is as follows. Component of the Mediator complex, a coactivator involved in the regulated transcription of nearly all RNA polymerase II-dependent genes. Mediator functions as a bridge to convey information from gene-specific regulatory proteins to the basal RNA polymerase II transcription machinery. Mediator is recruited to promoters by direct interactions with regulatory proteins and serves as a scaffold for the assembly of a functional preinitiation complex with RNA polymerase II and the general transcription factors. The protein is Mediator of RNA polymerase II transcription subunit 1 (med1) of Xenopus tropicalis (Western clawed frog).